Reading from the N-terminus, the 96-residue chain is UPF0235 protein ESA_00387 (96 aa).

The protein belongs to the UPF0235 family.

This Cronobacter sakazakii (strain ATCC BAA-894) (Enterobacter sakazakii) protein is UPF0235 protein ESA_00387.